We begin with the raw amino-acid sequence, 395 residues long: S-adenosylmethionine synthase (395 aa).

ATP is bound at residue H15. D17 contacts Mg(2+). E43 provides a ligand contact to K(+). Residue Q99 coordinates L-methionine. The interval 99-109 (QSPDIAMGVNE) is flexible loop. ATP-binding positions include 174-176 (DGK), 240-241 (RF), D249, 255-256 (RK), A272, and K276. Position 249 (D249) interacts with L-methionine. Residue K280 coordinates L-methionine.

It belongs to the AdoMet synthase family. Homotetramer; dimer of dimers. Requires Mg(2+) as cofactor. K(+) serves as cofactor.

Its subcellular location is the cytoplasm. The catalysed reaction is L-methionine + ATP + H2O = S-adenosyl-L-methionine + phosphate + diphosphate. It participates in amino-acid biosynthesis; S-adenosyl-L-methionine biosynthesis; S-adenosyl-L-methionine from L-methionine: step 1/1. Catalyzes the formation of S-adenosylmethionine (AdoMet) from methionine and ATP. The overall synthetic reaction is composed of two sequential steps, AdoMet formation and the subsequent tripolyphosphate hydrolysis which occurs prior to release of AdoMet from the enzyme. The protein is S-adenosylmethionine synthase of Moorella thermoacetica (strain ATCC 39073 / JCM 9320).